The following is a 151-amino-acid chain: Large-conductance mechanosensitive channel (151 aa).

A run of 2 helical transmembrane segments spans residues 19–39 (VGII…GDVL) and 85–105 (GLFI…FFLV).

The protein belongs to the MscL family. Homopentamer.

The protein resides in the cell inner membrane. Functionally, channel that opens in response to stretch forces in the membrane lipid bilayer. May participate in the regulation of osmotic pressure changes within the cell. The protein is Large-conductance mechanosensitive channel of Chlorobaculum parvum (strain DSM 263 / NCIMB 8327) (Chlorobium vibrioforme subsp. thiosulfatophilum).